Here is a 199-residue protein sequence, read N- to C-terminus: Thymidylate kinase (199 aa).

7–14 (GIDGSGKS) serves as a coordination point for ATP.

This sequence belongs to the thymidylate kinase family.

It catalyses the reaction dTMP + ATP = dTDP + ADP. Its function is as follows. Phosphorylation of dTMP to form dTDP in both de novo and salvage pathways of dTTP synthesis. This chain is Thymidylate kinase, found in Thermosipho melanesiensis (strain DSM 12029 / CIP 104789 / BI429).